The following is a 142-amino-acid chain: Large ribosomal subunit protein uL13 (142 aa).

Belongs to the universal ribosomal protein uL13 family. As to quaternary structure, part of the 50S ribosomal subunit.

In terms of biological role, this protein is one of the early assembly proteins of the 50S ribosomal subunit, although it is not seen to bind rRNA by itself. It is important during the early stages of 50S assembly. This chain is Large ribosomal subunit protein uL13, found in Psychrobacter arcticus (strain DSM 17307 / VKM B-2377 / 273-4).